The primary structure comprises 557 residues: Potassium-transporting ATPase potassium-binding subunit (557 aa).

12 helical membrane-spanning segments follow: residues 5-25, 63-83, 132-152, 170-190, 253-273, 283-303, 329-349, 356-376, 379-399, 416-436, 484-504, and 526-546; these read GFLL…PLGS, LCAI…MLLG, GLTV…FALI, LLRI…LFFI, FVQM…FGEV, LLWA…WAEV, VLVS…AVIA, ALGG…FGGV, GLYG…LMIG, LTAL…ALAM, LLAF…MAIA, and LFVG…FIPA.

The protein belongs to the KdpA family. The system is composed of three essential subunits: KdpA, KdpB and KdpC.

It is found in the cell inner membrane. In terms of biological role, part of the high-affinity ATP-driven potassium transport (or Kdp) system, which catalyzes the hydrolysis of ATP coupled with the electrogenic transport of potassium into the cytoplasm. This subunit binds the periplasmic potassium ions and delivers the ions to the membrane domain of KdpB through an intramembrane tunnel. The protein is Potassium-transporting ATPase potassium-binding subunit of Escherichia coli O9:H4 (strain HS).